The following is a 292-amino-acid chain: uncharacterized protein (292 aa).

Belongs to the glycosyltransferase 2 family. WaaE/KdtX subfamily.

This is an uncharacterized protein from Rickettsia prowazekii (strain Madrid E).